The following is a 155-amino-acid chain: UPF0461 protein C5orf24 homolog (155 aa).

The span at 60–69 shows a compositional bias: polar residues; sequence NETHLQTSTS. The interval 60-155 is disordered; sequence NETHLQTSTS…QQALMCSSDA (96 aa). Positions 78 to 92 are enriched in basic residues; the sequence is LKKKKNVGRSGKRGR. The span at 94 to 107 shows a compositional bias: polar residues; it reads SGTTKSAGYRTSTG.

This sequence belongs to the UPF0461 family.

This chain is UPF0461 protein C5orf24 homolog, found in Xenopus laevis (African clawed frog).